We begin with the raw amino-acid sequence, 116 residues long: U16-barytoxin-Tl1a (116 aa).

The first 20 residues, 1–20 (MKTIIVFLSLLVLATKFGDA), serve as a signal peptide directing secretion. Positions 21 to 74 (KEGVNQEQKKEVTQNEFRVEYLNEMAAMSLLQQLEAIESALFEKEAGRNSRQKR) are excised as a propeptide. 3 disulfides stabilise this stretch: cysteine 75–cysteine 90, cysteine 82–cysteine 95, and cysteine 89–cysteine 110.

Belongs to the neurotoxin 14 (magi-1) family. 06 (ICK-Trit) subfamily. As to expression, expressed by the venom gland.

Its subcellular location is the secreted. In terms of biological role, ion channel inhibitor. This chain is U16-barytoxin-Tl1a, found in Trittame loki (Brush-footed trapdoor spider).